A 288-amino-acid chain; its full sequence is Acetyl-coenzyme A carboxylase carboxyl transferase subunit beta (288 aa).

Residues 34 to 288 (LFAKCPACKH…HLVAFHGGGQ (255 aa)) enclose the CoA carboxyltransferase N-terminal domain. Residues C38, C41, C56, and C59 each contribute to the Zn(2+) site. Residues 38–59 (CPACKHMIYKKDLGLAKICPTC) form a C4-type zinc finger.

It belongs to the AccD/PCCB family. Acetyl-CoA carboxylase is a heterohexamer composed of biotin carboxyl carrier protein (AccB), biotin carboxylase (AccC) and two subunits each of ACCase subunit alpha (AccA) and ACCase subunit beta (AccD). Zn(2+) serves as cofactor.

It is found in the cytoplasm. It carries out the reaction N(6)-carboxybiotinyl-L-lysyl-[protein] + acetyl-CoA = N(6)-biotinyl-L-lysyl-[protein] + malonyl-CoA. It participates in lipid metabolism; malonyl-CoA biosynthesis; malonyl-CoA from acetyl-CoA: step 1/1. Component of the acetyl coenzyme A carboxylase (ACC) complex. Biotin carboxylase (BC) catalyzes the carboxylation of biotin on its carrier protein (BCCP) and then the CO(2) group is transferred by the transcarboxylase to acetyl-CoA to form malonyl-CoA. This is Acetyl-coenzyme A carboxylase carboxyl transferase subunit beta from Streptococcus pyogenes serotype M28 (strain MGAS6180).